The primary structure comprises 302 residues: Proteasome subunit beta (302 aa).

Over residues 1–10 the composition is skewed to basic and acidic residues; the sequence is MAGRVREVSH. Residues 1 to 21 form a disordered region; sequence MAGRVREVSHSSDQSGRLPAA. Positions 1–67 are cleaved as a propeptide — removed in mature form; by autocatalysis; that stretch reads MAGRVREVSH…GPGAGEPPHA (67 aa). Residue T68 is the Nucleophile of the active site. The tract at residues 283–302 is disordered; that stretch reads RRGNPGGNPGISAVHGDGGN.

The protein belongs to the peptidase T1B family. As to quaternary structure, the 20S proteasome core is composed of 14 alpha and 14 beta subunits that assemble into four stacked heptameric rings, resulting in a barrel-shaped structure. The two inner rings, each composed of seven catalytic beta subunits, are sandwiched by two outer rings, each composed of seven alpha subunits. The catalytic chamber with the active sites is on the inside of the barrel. Has a gated structure, the ends of the cylinder being occluded by the N-termini of the alpha-subunits. Is capped by the proteasome-associated ATPase, ARC.

It is found in the cytoplasm. It catalyses the reaction Cleavage of peptide bonds with very broad specificity.. It participates in protein degradation; proteasomal Pup-dependent pathway. With respect to regulation, the formation of the proteasomal ATPase ARC-20S proteasome complex, likely via the docking of the C-termini of ARC into the intersubunit pockets in the alpha-rings, may trigger opening of the gate for substrate entry. Interconversion between the open-gate and close-gate conformations leads to a dynamic regulation of the 20S proteasome proteolysis activity. Component of the proteasome core, a large protease complex with broad specificity involved in protein degradation. In Kineococcus radiotolerans (strain ATCC BAA-149 / DSM 14245 / SRS30216), this protein is Proteasome subunit beta.